The chain runs to 398 residues: ATP-dependent RNA helicase eIF4A (398 aa).

The Q motif motif lies at 25–53 (DSFDTMNLKPELLRGVYAYGFERPSAIQQ). The Helicase ATP-binding domain maps to 56 to 226 (IMPVIKGHDV…TKFMRDPVRI (171 aa)). Residue 69-76 (AQSGTGKT) participates in ATP binding. The short motif at 174–177 (DEAD) is the DEAD box element. Positions 237–398 (GIKQFYIAVE…EMPMNVADLI (162 aa)) constitute a Helicase C-terminal domain.

Belongs to the DEAD box helicase family. eIF4A subfamily. As to quaternary structure, component of the eIF4F complex, which composition varies with external and internal environmental conditions. It is composed of at least eIF4A, eIF4E and eIF4G.

The protein resides in the cytoplasm. It carries out the reaction ATP + H2O = ADP + phosphate + H(+). Its function is as follows. ATP-dependent RNA helicase which is a subunit of the eIF4F complex involved in cap recognition and is required for mRNA binding to ribosome. In the current model of translation initiation, eIF4A unwinds RNA secondary structures in the 5'-UTR of mRNAs which is necessary to allow efficient binding of the small ribosomal subunit, and subsequent scanning for the initiator codon. This Sclerotinia sclerotiorum (strain ATCC 18683 / 1980 / Ss-1) (White mold) protein is ATP-dependent RNA helicase eIF4A (tif1).